We begin with the raw amino-acid sequence, 215 residues long: Ribonuclease T (215 aa).

In terms of domain architecture, Exonuclease spans 20–194 (VVIDVETAGF…YDTERTAVLF (175 aa)). The Mg(2+) site is built by Asp-23, Glu-25, His-181, and Asp-186. Catalysis depends on His-181, which acts as the Proton donor/acceptor.

This sequence belongs to the RNase T family. Homodimer. The cofactor is Mg(2+).

Trims short 3' overhangs of a variety of RNA species, leaving a one or two nucleotide 3' overhang. Responsible for the end-turnover of tRNA: specifically removes the terminal AMP residue from uncharged tRNA (tRNA-C-C-A). Also appears to be involved in tRNA biosynthesis. This chain is Ribonuclease T, found in Salmonella paratyphi A (strain ATCC 9150 / SARB42).